A 435-amino-acid chain; its full sequence is Pregnancy-specific beta-1-glycoprotein 6 (435 aa).

The N-terminal stretch at 1 to 34 is a signal peptide; that stretch reads MGPLSAPPCTQHITWKGLLLTASLLNFWNLPTTA. An Ig-like V-type domain is found at 35–143; it reads QVIIEAKPPK…TGYFTVTLYS (109 aa). 3 N-linked (GlcNAc...) asparagine glycosylation sites follow: Asn61, Asn103, and Asn110. Positions 126–128 match the Cell attachment site motif; sequence RGD. Ig-like C2-type domains lie at 148 to 233, 241 to 326, and 334 to 405; these read PSIS…VTLN, PYIT…VTLN, and PRIY…KEIS. Cystine bridges form between Cys168–Cys216, Cys261–Cys309, and Cys353–Cys393. 4 N-linked (GlcNAc...) asparagine glycosylation sites follow: Asn198, Asn267, Asn302, and Asn386.

This sequence belongs to the immunoglobulin superfamily. CEA family.

The protein resides in the secreted. The protein is Pregnancy-specific beta-1-glycoprotein 6 (PSG6) of Homo sapiens (Human).